Reading from the N-terminus, the 548-residue chain is Chaperonin GroEL (548 aa).

ATP contacts are provided by residues 30–33, lysine 51, 87–91, glycine 415, 479–481, and aspartate 495; these read TLGP, DGTTT, and NAA.

This sequence belongs to the chaperonin (HSP60) family. Forms a cylinder of 14 subunits composed of two heptameric rings stacked back-to-back. Interacts with the co-chaperonin GroES. In terms of processing, UMPylated on a tyrosine residue by YdiU under ATP-limited conditions.

It is found in the cytoplasm. The catalysed reaction is ATP + H2O + a folded polypeptide = ADP + phosphate + an unfolded polypeptide.. With respect to regulation, UMPylation of the chaperone by YdiU negatively regulates its activity, facilitating Salmonella survival under ATP-limited conditions. In terms of biological role, together with its co-chaperonin GroES, plays an essential role in assisting protein folding. The GroEL-GroES system forms a nano-cage that allows encapsulation of the non-native substrate proteins and provides a physical environment optimized to promote and accelerate protein folding. The chain is Chaperonin GroEL from Salmonella typhimurium (strain LT2 / SGSC1412 / ATCC 700720).